The following is a 955-amino-acid chain: Protein translocase subunit SecA (955 aa).

Residues Gln87, 105 to 109, and Asp494 contribute to the ATP site; that span reads GEGKT. A disordered region spans residues 861–955; the sequence is ASPAPAAPRP…KKAPRTKRKR (95 aa). A compositionally biased stretch (low complexity) spans 874 to 888; the sequence is QEAAQQAQGTAAPSA. A compositionally biased stretch (basic residues) spans 943 to 955; the sequence is SKGKKAPRTKRKR.

It belongs to the SecA family. Monomer and homodimer. Part of the essential Sec protein translocation apparatus which comprises SecA, SecYEG and auxiliary proteins SecDF. Other proteins may also be involved.

The protein resides in the cell membrane. The protein localises to the cytoplasm. It catalyses the reaction ATP + H2O + cellular proteinSide 1 = ADP + phosphate + cellular proteinSide 2.. Its function is as follows. Part of the Sec protein translocase complex. Interacts with the SecYEG preprotein conducting channel. Has a central role in coupling the hydrolysis of ATP to the transfer of proteins into and across the cell membrane, serving as an ATP-driven molecular motor driving the stepwise translocation of polypeptide chains across the membrane. This chain is Protein translocase subunit SecA, found in Rhodococcus jostii (strain RHA1).